A 204-amino-acid polypeptide reads, in one-letter code: UPF0637 protein SAR1080 (204 aa).

It belongs to the UPF0637 family.

The polypeptide is UPF0637 protein SAR1080 (Staphylococcus aureus (strain MRSA252)).